Reading from the N-terminus, the 293-residue chain is MTVHTAAEKAYILSEALPYIQRFYDKTIVIKYGGNAMTERHLMEAFAKDVVLLKLVGMNPVVVHGGGPQIAGLLQRIGKQSEFIQGMRVTDEETLDVVEMVLGGLVNQDIVTLINKHGGRAVGLTGKDGNFIHAKKMLVKSKEKADEMLDIGQVGEITGIDPEIIQVLDARDFIPVVAPLGTDAEGNAYNINADVAAGKIAGVLQAEKVIFMTNTPGVLDKDKKLLTGLTPREISDLIADDTISGGMIPKVGYAVDAVNSGVKTAHIIDGRVEHALLLEVLTPEGVGTLIKRS.

Substrate is bound by residues 66–67 (GG), arginine 88, and asparagine 190.

The protein belongs to the acetylglutamate kinase family. ArgB subfamily.

It is found in the cytoplasm. It carries out the reaction N-acetyl-L-glutamate + ATP = N-acetyl-L-glutamyl 5-phosphate + ADP. It functions in the pathway amino-acid biosynthesis; L-arginine biosynthesis; N(2)-acetyl-L-ornithine from L-glutamate: step 2/4. In terms of biological role, catalyzes the ATP-dependent phosphorylation of N-acetyl-L-glutamate. The chain is Acetylglutamate kinase from Thiobacillus denitrificans (strain ATCC 25259 / T1).